The sequence spans 376 residues: MASYPCHQHASAFDQAARSRGHSNRRTALRPRRQQEATEVRLEQKMPTLLRVYIDGPHGMGKTTTTQLLVALGSRDDIVYVPEPMTYWQVLGASETIANIYTTQHRLDQGEISAGDAAVVMTSAQITMGMPYAVTDAVLAPHIGGEAGSSHAPPPALTLIFDRHPIAALLCYPAARYLMGSMTPQAVLAFVALIPPTLPGTNIVLGALPEDRHIDRLAKRQRPGERLDLAMLAAIRRVYGLLANTVRYLQGGGSWREDWGQLSGTAVPPQGAEPQSNAGPRPHIGDTLFTLFRAPELLAPNGDLYNVFAWALDVLAKRLRPMHVFILDYDQSPAGCRDALLQLTSGMVQTHVTTPGSIPTICDLARTFAREMGEAN.

The disordered stretch occupies residues 1 to 39; that stretch reads MASYPCHQHASAFDQAARSRGHSNRRTALRPRRQQEATE. A compositionally biased stretch (basic residues) spans 19 to 32; it reads SRGHSNRRTALRPR. 56–63 is a binding site for ATP; it reads GPHGMGKT. The active-site Proton acceptor is the Glu-83. Residues Tyr-101 and Gln-125 each coordinate substrate. Position 216 (Arg-216) interacts with ATP. Position 222 (Arg-222) interacts with substrate. A disordered region spans residues 260-280; sequence GQLSGTAVPPQGAEPQSNAGP.

The protein belongs to the herpesviridae thymidine kinase family. Homodimer.

It catalyses the reaction thymidine + ATP = dTMP + ADP + H(+). Functionally, catalyzes the transfer of the gamma-phospho group of ATP to thymidine to generate dTMP in the salvage pathway of pyrimidine synthesis. The dTMP serves as a substrate for DNA polymerase during viral DNA replication. Allows the virus to be reactivated and to grow in non-proliferative cells lacking a high concentration of phosphorylated nucleic acid precursors. The chain is Thymidine kinase from Homo sapiens (Human).